Reading from the N-terminus, the 446-residue chain is Elongation factor Ts, mitochondrial (446 aa).

A mitochondrion-targeting transit peptide spans 1 to 33 (MSGSRSALSVVRLAACAKPCTLGSTSSVLTRPF).

Belongs to the EF-Ts family.

It is found in the mitochondrion. In terms of biological role, associates with the EF-Tu.GDP complex and induces the exchange of GDP to GTP. It remains bound to the aminoacyl-tRNA.EF-Tu.GTP complex up to the GTP hydrolysis stage on the ribosome. The chain is Elongation factor Ts, mitochondrial from Mycosarcoma maydis (Corn smut fungus).